The chain runs to 416 residues: 2-aminoadipate transaminase (416 aa).

Pyridoxal 5'-phosphate contacts are provided by residues 102-103 (GA) and Gln-233. The residue at position 259 (Lys-259) is an N6-(pyridoxal phosphate)lysine. Thr-288 serves as a coordination point for pyridoxal 5'-phosphate.

The protein belongs to the class-III pyridoxal-phosphate-dependent aminotransferase family. It depends on pyridoxal 5'-phosphate as a cofactor.

The catalysed reaction is L-2-aminoadipate + 2-oxoglutarate = 2-oxoadipate + L-glutamate. The enzyme catalyses 5-aminopentanoate + 2-oxoglutarate = 5-oxopentanoate + L-glutamate. It functions in the pathway amino-acid degradation. In terms of biological role, catalyzes the conversion of 2-aminoadipate (2AA) to 2-oxoadipate (2OA). Is most active on L-2-aminoadipate (L-2AA) and shows only weak activity on the enantiomer, D-2-aminoadipate (D-2AA). Shows moderate activity on 5-aminovalerate (5AVA) and weak activity toward 4-aminobutyrate (GABA). Is involved in a D-lysine catabolic pathway. This chain is 2-aminoadipate transaminase, found in Pseudomonas putida (strain ATCC 47054 / DSM 6125 / CFBP 8728 / NCIMB 11950 / KT2440).